The sequence spans 174 residues: uncharacterized protein (174 aa).

This is an uncharacterized protein from Mycobacterium tuberculosis (strain CDC 1551 / Oshkosh).